A 262-amino-acid polypeptide reads, in one-letter code: Pyridoxine 5'-phosphate synthase (262 aa).

N6 lines the 3-amino-2-oxopropyl phosphate pocket. 8 to 9 lines the 1-deoxy-D-xylulose 5-phosphate pocket; that stretch reads DH. R17 lines the 3-amino-2-oxopropyl phosphate pocket. The active-site Proton acceptor is the H42. 2 residues coordinate 1-deoxy-D-xylulose 5-phosphate: R44 and H49. E69 (proton acceptor) is an active-site residue. T99 contributes to the 1-deoxy-D-xylulose 5-phosphate binding site. H213 (proton donor) is an active-site residue. Residues G214 and 235 to 236 each bind 3-amino-2-oxopropyl phosphate; that span reads GH.

This sequence belongs to the PNP synthase family. As to quaternary structure, homooctamer; tetramer of dimers.

The protein resides in the cytoplasm. It carries out the reaction 3-amino-2-oxopropyl phosphate + 1-deoxy-D-xylulose 5-phosphate = pyridoxine 5'-phosphate + phosphate + 2 H2O + H(+). Its pathway is cofactor biosynthesis; pyridoxine 5'-phosphate biosynthesis; pyridoxine 5'-phosphate from D-erythrose 4-phosphate: step 5/5. Functionally, catalyzes the complicated ring closure reaction between the two acyclic compounds 1-deoxy-D-xylulose-5-phosphate (DXP) and 3-amino-2-oxopropyl phosphate (1-amino-acetone-3-phosphate or AAP) to form pyridoxine 5'-phosphate (PNP) and inorganic phosphate. In Wolinella succinogenes (strain ATCC 29543 / DSM 1740 / CCUG 13145 / JCM 31913 / LMG 7466 / NCTC 11488 / FDC 602W) (Vibrio succinogenes), this protein is Pyridoxine 5'-phosphate synthase.